Consider the following 491-residue polypeptide: Endoglucanase 14 (491 aa).

The N-terminal stretch at methionine 1–serine 31 is a signal peptide. Aspartate 86 acts as the Nucleophile in catalysis. The N-linked (GlcNAc...) asparagine glycan is linked to asparagine 397. Catalysis depends on residues histidine 413, aspartate 465, and glutamate 474.

Belongs to the glycosyl hydrolase 9 (cellulase E) family.

The protein localises to the secreted. The catalysed reaction is Endohydrolysis of (1-&gt;4)-beta-D-glucosidic linkages in cellulose, lichenin and cereal beta-D-glucans.. This Arabidopsis thaliana (Mouse-ear cress) protein is Endoglucanase 14.